The sequence spans 178 residues: Ribosome maturation factor RimM (178 aa).

Residues E99 to F178 form the PRC barrel domain.

This sequence belongs to the RimM family. In terms of assembly, binds ribosomal protein uS19.

The protein resides in the cytoplasm. Functionally, an accessory protein needed during the final step in the assembly of 30S ribosomal subunit, possibly for assembly of the head region. Essential for efficient processing of 16S rRNA. May be needed both before and after RbfA during the maturation of 16S rRNA. It has affinity for free ribosomal 30S subunits but not for 70S ribosomes. This Mannheimia succiniciproducens (strain KCTC 0769BP / MBEL55E) protein is Ribosome maturation factor RimM.